A 267-amino-acid chain; its full sequence is Phosphate import ATP-binding protein PstB 2 (267 aa).

The ABC transporter domain occupies 21-262; the sequence is LSTKDVHVYY…AKLQSTNDYV (242 aa). ATP is bound at residue 53–60; it reads GPSGSGKS.

The protein belongs to the ABC transporter superfamily. Phosphate importer (TC 3.A.1.7) family. As to quaternary structure, the complex is composed of two ATP-binding proteins (PstB), two transmembrane proteins (PstC and PstA) and a solute-binding protein (PstS).

The protein localises to the cell membrane. The catalysed reaction is phosphate(out) + ATP + H2O = ADP + 2 phosphate(in) + H(+). Part of the ABC transporter complex PstSACB involved in phosphate import. Responsible for energy coupling to the transport system. The sequence is that of Phosphate import ATP-binding protein PstB 2 from Streptococcus pneumoniae (strain ATCC BAA-255 / R6).